We begin with the raw amino-acid sequence, 573 residues long: Urease subunit alpha (573 aa).

A Urease domain is found at 136–573 (GAIDCHVHLI…LPMAQRYFLF (438 aa)). Residues H141, H143, and K224 each coordinate Ni(2+). K224 is subject to N6-carboxylysine. H226 contacts substrate. H253 and H279 together coordinate Ni(2+). H327 acts as the Proton donor in catalysis. D367 provides a ligand contact to Ni(2+).

The protein belongs to the metallo-dependent hydrolases superfamily. Urease alpha subunit family. In terms of assembly, heterotrimer of UreA (gamma), UreB (beta) and UreC (alpha) subunits. Three heterotrimers associate to form the active enzyme. It depends on Ni cation as a cofactor. Post-translationally, carboxylation allows a single lysine to coordinate two nickel ions.

The protein resides in the cytoplasm. The catalysed reaction is urea + 2 H2O + H(+) = hydrogencarbonate + 2 NH4(+). It functions in the pathway nitrogen metabolism; urea degradation; CO(2) and NH(3) from urea (urease route): step 1/1. The sequence is that of Urease subunit alpha from Mycobacterium sp. (strain JLS).